A 426-amino-acid polypeptide reads, in one-letter code: Kynureninase (426 aa).

Pyridoxal 5'-phosphate is bound by residues L110, S111, 138 to 141 (FPSD), D223, H226, and Y248. The residue at position 249 (K249) is an N6-(pyridoxal phosphate)lysine. Pyridoxal 5'-phosphate-binding residues include W279 and N307.

It belongs to the kynureninase family. As to quaternary structure, homodimer. It depends on pyridoxal 5'-phosphate as a cofactor.

It catalyses the reaction L-kynurenine + H2O = anthranilate + L-alanine + H(+). The catalysed reaction is 3-hydroxy-L-kynurenine + H2O = 3-hydroxyanthranilate + L-alanine + H(+). Its pathway is amino-acid degradation; L-kynurenine degradation; L-alanine and anthranilate from L-kynurenine: step 1/1. The protein operates within cofactor biosynthesis; NAD(+) biosynthesis; quinolinate from L-kynurenine: step 2/3. In terms of biological role, catalyzes the cleavage of L-kynurenine (L-Kyn) and L-3-hydroxykynurenine (L-3OHKyn) into anthranilic acid (AA) and 3-hydroxyanthranilic acid (3-OHAA), respectively. This Myxococcus xanthus (strain DK1622) protein is Kynureninase.